We begin with the raw amino-acid sequence, 130 residues long: Large ribosomal subunit protein bL12 (130 aa).

Belongs to the bacterial ribosomal protein bL12 family. As to quaternary structure, homodimer. Part of the ribosomal stalk of the 50S ribosomal subunit. Forms a multimeric L10(L12)X complex, where L10 forms an elongated spine to which 2 to 4 L12 dimers bind in a sequential fashion. Binds GTP-bound translation factors.

Functionally, forms part of the ribosomal stalk which helps the ribosome interact with GTP-bound translation factors. Is thus essential for accurate translation. The sequence is that of Large ribosomal subunit protein bL12 from Nostoc punctiforme (strain ATCC 29133 / PCC 73102).